Reading from the N-terminus, the 339-residue chain is Heat-inducible transcription repressor HrcA (339 aa).

The protein belongs to the HrcA family.

Functionally, negative regulator of class I heat shock genes (grpE-dnaK-dnaJ and groELS operons). Prevents heat-shock induction of these operons. This is Heat-inducible transcription repressor HrcA from Thermotoga neapolitana (strain ATCC 49049 / DSM 4359 / NBRC 107923 / NS-E).